A 180-amino-acid chain; its full sequence is Ribulose bisphosphate carboxylase small subunit, chloroplastic 3 (180 aa).

A chloroplast-targeting transit peptide spans 1 to 56; sequence MASSVMSSAAVATRGNGAQASMVAPFTGLKSTASFPVSRKQNLDITSIASNGGRVS.

It belongs to the RuBisCO small chain family. In terms of assembly, heterohexadecamer of 8 large and 8 small subunits. (Microbial infection) Binds to tobamovirus movement protein; this interaction seems required for viral systemic movement.

The protein localises to the plastid. It is found in the chloroplast. It localises to the cell junction. The protein resides in the plasmodesma. In terms of biological role, ruBisCO catalyzes two reactions: the carboxylation of D-ribulose 1,5-bisphosphate, the primary event in carbon dioxide fixation, as well as the oxidative fragmentation of the pentose substrate. Both reactions occur simultaneously and in competition at the same active site. Although the small subunit is not catalytic it is essential for maximal activity. Involved in antiviral defenses. This chain is Ribulose bisphosphate carboxylase small subunit, chloroplastic 3, found in Solanum lycopersicum (Tomato).